The primary structure comprises 329 residues: DNA-directed RNA polymerase subunit alpha (329 aa).

The tract at residues 1–234 (MQGSVTEFLK…EQLDAFVELR (234 aa)) is alpha N-terminal domain (alpha-NTD). An alpha C-terminal domain (alpha-CTD) region spans residues 248–329 (FDPILLRPVD…WPPASLADDL (82 aa)).

This sequence belongs to the RNA polymerase alpha chain family. As to quaternary structure, homodimer. The RNAP catalytic core consists of 2 alpha, 1 beta, 1 beta' and 1 omega subunit. When a sigma factor is associated with the core the holoenzyme is formed, which can initiate transcription.

The enzyme catalyses RNA(n) + a ribonucleoside 5'-triphosphate = RNA(n+1) + diphosphate. DNA-dependent RNA polymerase catalyzes the transcription of DNA into RNA using the four ribonucleoside triphosphates as substrates. In Shewanella putrefaciens (strain CN-32 / ATCC BAA-453), this protein is DNA-directed RNA polymerase subunit alpha.